The following is a 636-amino-acid chain: 1-deoxy-D-xylulose-5-phosphate synthase 2 (636 aa).

Thiamine diphosphate-binding positions include H78 and A119–S121. D150 is a Mg(2+) binding site. Residues G151–S152, N179, Y288, and E370 each bind thiamine diphosphate. Residue N179 participates in Mg(2+) binding.

Belongs to the transketolase family. DXPS subfamily. As to quaternary structure, homodimer. It depends on Mg(2+) as a cofactor. Thiamine diphosphate serves as cofactor.

The catalysed reaction is D-glyceraldehyde 3-phosphate + pyruvate + H(+) = 1-deoxy-D-xylulose 5-phosphate + CO2. It functions in the pathway metabolic intermediate biosynthesis; 1-deoxy-D-xylulose 5-phosphate biosynthesis; 1-deoxy-D-xylulose 5-phosphate from D-glyceraldehyde 3-phosphate and pyruvate: step 1/1. Functionally, catalyzes the acyloin condensation reaction between C atoms 2 and 3 of pyruvate and glyceraldehyde 3-phosphate to yield 1-deoxy-D-xylulose-5-phosphate (DXP). This is 1-deoxy-D-xylulose-5-phosphate synthase 2 from Jannaschia sp. (strain CCS1).